The primary structure comprises 158 residues: uncharacterized protein (158 aa).

Residues 1-30 (MNKKFLKCGTLFLISCSILGSTIPAVTVFS) form the signal peptide.

This is an uncharacterized protein from Streptococcus pneumoniae serotype 2 (strain D39 / NCTC 7466).